A 249-amino-acid polypeptide reads, in one-letter code: Histone H1 (249 aa).

Composition is skewed to low complexity over residues 1 to 19 and 27 to 43; these read MSDSVVAVSASPVTPQTAS and KKPASASASKAKKTTAP. 2 disordered regions span residues 1-53 and 105-249; these read MSDS…QQMV and QTKG…ATKK. Positions 45 to 119 constitute an H15 domain; sequence THPPTQQMVD…GASGSFKLSA (75 aa). A compositionally biased stretch (basic and acidic residues) spans 121 to 134; sequence SKKEPKPKVSSVEK. Positions 146 to 158 are enriched in basic residues; the sequence is AKKKTISATKKPK. Residues 173–190 are compositionally biased toward basic and acidic residues; sequence KSVDKKKAEKAKAKDAKK. Residues 195-233 show a composition bias toward low complexity; it reads KAKPTTAKAKSSAAKPKTPKPKTTSAKPKKVVAAASPKK. A compositionally biased stretch (basic residues) spans 234–249; it reads AAAKKPKAKTASATKK.

It belongs to the histone H1/H5 family.

It localises to the nucleus. The protein localises to the chromosome. Its function is as follows. Histones H1 are necessary for the condensation of nucleosome chains into higher-order structures. This is Histone H1 (His1) from Drosophila hydei (Fruit fly).